We begin with the raw amino-acid sequence, 226 residues long: ATP-dependent dethiobiotin synthetase BioD (226 aa).

ATP is bound at residue 12–17 (GVGKTV). T16 serves as a coordination point for Mg(2+). K37 is a catalytic residue. T41 is a binding site for substrate. ATP contacts are provided by residues D49, 108–111 (EGAG), 169–170 (GS), and 197–199 (PAG). Residues D49 and E108 each contribute to the Mg(2+) site.

This sequence belongs to the dethiobiotin synthetase family. As to quaternary structure, homodimer. Requires Mg(2+) as cofactor.

The protein localises to the cytoplasm. It catalyses the reaction (7R,8S)-7,8-diammoniononanoate + CO2 + ATP = (4R,5S)-dethiobiotin + ADP + phosphate + 3 H(+). It participates in cofactor biosynthesis; biotin biosynthesis; biotin from 7,8-diaminononanoate: step 1/2. Catalyzes a mechanistically unusual reaction, the ATP-dependent insertion of CO2 between the N7 and N8 nitrogen atoms of 7,8-diaminopelargonic acid (DAPA, also called 7,8-diammoniononanoate) to form a ureido ring. This chain is ATP-dependent dethiobiotin synthetase BioD, found in Mycobacterium bovis (strain ATCC BAA-935 / AF2122/97).